The sequence spans 664 residues: UvrABC system protein B (664 aa).

The Helicase ATP-binding domain occupies 23–412; that stretch reads EGLNRGMRFQ…VVEQIIRPTG (390 aa). 36-43 contributes to the ATP binding site; it reads GVTGSGKT. Residues 89-112 carry the Beta-hairpin motif; the sequence is YYDYYQPEAYIPTKDLYIEKNADI. The region spanning 429-588 is the Helicase C-terminal domain; that stretch reads DLVNEIVKVK…ITPRSVIKPL (160 aa). One can recognise a UVR domain in the interval 622–657; that stretch reads EEYMAVLEEEMYRAASELRYEDAAALRDELFRIREE.

The protein belongs to the UvrB family. Forms a heterotetramer with UvrA during the search for lesions. Interacts with UvrC in an incision complex.

Its subcellular location is the cytoplasm. The UvrABC repair system catalyzes the recognition and processing of DNA lesions. A damage recognition complex composed of 2 UvrA and 2 UvrB subunits scans DNA for abnormalities. Upon binding of the UvrA(2)B(2) complex to a putative damaged site, the DNA wraps around one UvrB monomer. DNA wrap is dependent on ATP binding by UvrB and probably causes local melting of the DNA helix, facilitating insertion of UvrB beta-hairpin between the DNA strands. Then UvrB probes one DNA strand for the presence of a lesion. If a lesion is found the UvrA subunits dissociate and the UvrB-DNA preincision complex is formed. This complex is subsequently bound by UvrC and the second UvrB is released. If no lesion is found, the DNA wraps around the other UvrB subunit that will check the other stand for damage. This chain is UvrABC system protein B, found in Thermotoga maritima (strain ATCC 43589 / DSM 3109 / JCM 10099 / NBRC 100826 / MSB8).